The primary structure comprises 369 residues: Gibberellin 3-beta-dioxygenase 2-3 (369 aa).

The 102-residue stretch at 205 to 306 (MTATMHLNWY…RISLGYFLGP (102 aa)) folds into the Fe2OG dioxygenase domain. The Fe cation site is built by His229, Asp231, and His287. Arg297 is an active-site residue.

It belongs to the iron/ascorbate-dependent oxidoreductase family. GA3OX subfamily. The cofactor is L-ascorbate. Requires Fe cation as cofactor.

It carries out the reaction gibberellin A20 + 2-oxoglutarate + O2 = gibberellin A1 + succinate + CO2. In terms of biological role, converts the inactive gibberellin precursors GA9 and GA20 in the bioactives gibberellins GA4 and GA1. This chain is Gibberellin 3-beta-dioxygenase 2-3 (GA3ox2-3), found in Triticum aestivum (Wheat).